The following is a 217-amino-acid chain: GrpE protein homolog 1, mitochondrial (217 aa).

The transit peptide at 1-27 directs the protein to the mitochondrion; the sequence is MAAQCVRLARRSLPALALSLRPSPRLL. Residues 29–56 form a disordered region; that stretch reads TATKQKNSGQNLEEDMGQSEQKADPPAT. Residues 30–39 are compositionally biased toward polar residues; sequence ATKQKNSGQN. N6-acetyllysine; alternate is present on Lys94. Lys94 carries the N6-succinyllysine; alternate modification. Lys100 is modified (N6-acetyllysine). Lys120 is subject to N6-succinyllysine. At Lys215 the chain carries N6-acetyllysine; alternate. Position 215 is an N6-succinyllysine; alternate (Lys215).

It belongs to the GrpE family. In terms of assembly, probable component of the PAM complex at least composed of a mitochondrial HSP70 protein, GRPEL1 or GRPEL2, TIMM44, TIMM16/PAM16 and TIMM14/DNAJC19. Binds to HSP70, HSC70 and HSJ1B.

The protein localises to the mitochondrion matrix. Its function is as follows. Essential component of the PAM complex, a complex required for the translocation of transit peptide-containing proteins from the inner membrane into the mitochondrial matrix in an ATP-dependent manner. Seems to control the nucleotide-dependent binding of mitochondrial HSP70 to substrate proteins. The sequence is that of GrpE protein homolog 1, mitochondrial (GRPEL1) from Homo sapiens (Human).